The chain runs to 1001 residues: Integrator complex subunit 7 (1001 aa).

The disordered stretch occupies residues 980 to 1001 (DPSKQGAPAPSTSQAVGQTRRF). Residues 989-1001 (PSTSQAVGQTRRF) show a composition bias toward polar residues.

Belongs to the Integrator subunit 7 family. In terms of assembly, belongs to the multiprotein complex Integrator, at least composed of IntS1, IntS2, IntS3, IntS4, omd/IntS5, IntS6, defl/IntS7, IntS8, IntS9, IntS10, IntS11, IntS12, asun/IntS13, IntS14 and IntS15. The core complex associates with protein phosphatase 2A subunits mts/PP2A and Pp2A-29B, to form the Integrator-PP2A (INTAC) complex.

It is found in the nucleus. The protein resides in the cytoplasm. Component of the integrator complex, a multiprotein complex that terminates RNA polymerase II (Pol II) transcription in the promoter-proximal region of genes. The integrator complex provides a quality checkpoint during transcription elongation by driving premature transcription termination of transcripts that are unfavorably configured for transcriptional elongation: the complex terminates transcription by (1) catalyzing dephosphorylation of the C-terminal domain (CTD) of Pol II subunit Polr2A/Rbp1 and Spt5, and (2) degrading the exiting nascent RNA transcript via endonuclease activity. The integrator complex is also involved in the 3'-end processing of the U7 snRNA, and also the spliceosomal snRNAs U1, U2, U4 and U5. This chain is Integrator complex subunit 7, found in Drosophila melanogaster (Fruit fly).